The primary structure comprises 63 residues: Large ribosomal subunit protein bL28 (63 aa).

The protein belongs to the bacterial ribosomal protein bL28 family.

The chain is Large ribosomal subunit protein bL28 from Symbiobacterium thermophilum (strain DSM 24528 / JCM 14929 / IAM 14863 / T).